A 100-amino-acid polypeptide reads, in one-letter code: Large ribosomal subunit protein uL23 (100 aa).

This sequence belongs to the universal ribosomal protein uL23 family. As to quaternary structure, part of the 50S ribosomal subunit. Contacts protein L29, and trigger factor when it is bound to the ribosome.

Functionally, one of the early assembly proteins it binds 23S rRNA. One of the proteins that surrounds the polypeptide exit tunnel on the outside of the ribosome. Forms the main docking site for trigger factor binding to the ribosome. The polypeptide is Large ribosomal subunit protein uL23 (Mycobacterium leprae (strain Br4923)).